The primary structure comprises 81 residues: Photosystem I iron-sulfur center (81 aa).

2 consecutive 4Fe-4S ferredoxin-type domains span residues 2 to 31 and 39 to 68; these read AHTV…MVPW and IASA…IRVY. Positions 11, 14, 17, 21, 48, 51, 54, and 58 each coordinate [4Fe-4S] cluster.

As to quaternary structure, the eukaryotic PSI reaction center is composed of at least 11 subunits. Requires [4Fe-4S] cluster as cofactor.

The protein resides in the plastid. It is found in the cyanelle thylakoid membrane. The catalysed reaction is reduced [plastocyanin] + hnu + oxidized [2Fe-2S]-[ferredoxin] = oxidized [plastocyanin] + reduced [2Fe-2S]-[ferredoxin]. Its function is as follows. Apoprotein for the two 4Fe-4S centers FA and FB of photosystem I (PSI); essential for photochemical activity. FB is the terminal electron acceptor of PSI, donating electrons to ferredoxin. The C-terminus interacts with PsaA/B/D and helps assemble the protein into the PSI complex. Required for binding of PsaD and PsaE to PSI. PSI is a cytochrome c6-ferredoxin oxidoreductase, converting photonic excitation into a charge separation, which transfers an electron from the donor P700 chlorophyll pair to the spectroscopically characterized acceptors A0, A1, FX, FA and FB in turn. This Cyanophora paradoxa protein is Photosystem I iron-sulfur center.